We begin with the raw amino-acid sequence, 109 residues long: UPF0122 protein ABC2295 (109 aa).

Belongs to the UPF0122 family.

In terms of biological role, might take part in the signal recognition particle (SRP) pathway. This is inferred from the conservation of its genetic proximity to ftsY/ffh. May be a regulatory protein. The protein is UPF0122 protein ABC2295 of Shouchella clausii (strain KSM-K16) (Alkalihalobacillus clausii).